The following is a 349-amino-acid chain: CCN family member 2 (349 aa).

The first 26 residues, 1-26, serve as a signal peptide directing secretion; it reads MSATGLGPVRCAFVLLLALCSRPASS. One can recognise an IGFBP N-terminal domain in the interval 27–98; sequence QDCSAPCQCP…NRKIGVCTAK (72 aa). 6 disulfides stabilise this stretch: cysteine 29–cysteine 54, cysteine 33–cysteine 56, cysteine 35–cysteine 57, cysteine 43–cysteine 60, cysteine 68–cysteine 82, and cysteine 74–cysteine 95. A VWFC domain is found at 101-167; that stretch reads APCVFGGTVY…GKCCEEWVCD (67 aa). Positions 198–243 constitute a TSP type-1 domain; the sequence is NCLVQTTEWSACSKTCGMGISTRVTNDNAFCRLEKQSRLCMVRPCE. The heparin-binding stretch occupies residues 247–349; the sequence is EENIKKGKKC…YYRKMYGDMA (103 aa). 5 disulfides stabilise this stretch: cysteine 256/cysteine 293, cysteine 273/cysteine 307, cysteine 284/cysteine 323, cysteine 287/cysteine 325, and cysteine 292/cysteine 329. The 75-residue stretch at 256–330 folds into the CTCK domain; sequence CIRTPKISKP…KTCACHYNCP (75 aa).

It belongs to the CCN family. Monomer. Interacts with TSKU.

The protein resides in the secreted. Its subcellular location is the extracellular space. It localises to the extracellular matrix. Its function is as follows. Major connective tissue mitoattractant secreted by vascular endothelial cells. Promotes proliferation and differentiation of chondrocytes. Is involved in the stimulation of osteoblast differentiation and has a critical role in osteogenesis. Mediates heparin- and divalent cation-dependent cell adhesion in many cell types including fibroblasts, myofibroblasts, endothelial and epithelial cells. Enhances fibroblast growth factor-induced DNA synthesis. The sequence is that of CCN family member 2 (CCN2) from Bos taurus (Bovine).